The sequence spans 35 residues: Cupiennin-2a (35 aa).

Residue lysine 35 is modified to Lysine amide.

In terms of tissue distribution, expressed by the venom gland.

The protein resides in the secreted. The polypeptide is Cupiennin-2a (Cupiennius salei (American wandering spider)).